The primary structure comprises 1092 residues: Extended synaptotagmin-1 (1092 aa).

N-acetylmethionine is present on Met-1. Over 1–28 (MEHSPEEGASPEPSGQPPATDSTRDGGS) the chain is Cytoplasmic. Residues 1-36 (MEHSPEEGASPEPSGQPPATDSTRDGGSGVPPAGPG) are disordered. Residues 29–49 (GVPPAGPGAASEALAVLTSFG) form a helical membrane-spanning segment. At 50–52 (RRL) the chain is on the lumenal side. Residues 53–73 (LVLVPVYLAGAAGLSVGFVLF) traverse the membrane as a helical segment. Residues 74-1092 (GLALYLGWRR…LMDDRDKGGS (1019 aa)) lie on the Cytoplasmic side of the membrane. An SMP-LTD domain is found at 125 to 303 (DVEKAEWLNK…LPNRLLVPLV (179 aa)). C2 domains are found at residues 302–423 (LVPD…DNWY), 444–570 (DAEK…QLSS), 616–738 (DAPP…DEWL), and 769–886 (QVNS…ALSG). Ser-314 bears the Phosphoserine; by CDK5 mark. Positions 334, 335, 347, 394, 396, 398, 400, and 401 each coordinate Ca(2+). The interval 604–628 (WDRESLETGSSVDAPPRPYHTTPNS) is disordered. An N6-acetyllysine modification is found at Lys-804. Ser-807 carries the post-translational modification Phosphoserine. Positions 909–937 (HSHSYSHSHSSSSLNDEPEALGGPTHPAS) are disordered. A compositionally biased stretch (low complexity) spans 911 to 921 (HSYSHSHSSSS). A phosphoserine mark is found at Ser-937 and Ser-951. Residues 959 to 1081 (PLGQVKLTVW…DLSQGAAQWY (123 aa)) enclose the C2 5 domain. Tyr-997 is modified (phosphotyrosine). Residues 1006–1013 (KNRSTKRK) are required for phosphatidylinositol 4,5-bisphosphate-dependent location at the cell membrane.

Belongs to the extended synaptotagmin family. Interacts with ESYT2 and ESYT3. Interacts with ADGRD1; inhibiting the G-protein-coupled receptor activity of ADGRD1. Interaction with ADGRD1 is abolished when cytosolic calcium increases, relieving ADGRD1 G-protein-coupled receptor activity. Interacts (phosphorylated form) with SLC2A4. Post-translationally, phosphorylated on Ser residues in insulin-treated adipocytes (in vitro); this promotes interaction with SLC2A4.

Its subcellular location is the endoplasmic reticulum membrane. The protein resides in the cell membrane. Binds calcium (via the C2 domains) and translocates to sites of contact between the endoplasmic reticulum and the cell membrane in response to increased cytosolic calcium levels. Helps tether the endoplasmic reticulum to the cell membrane and promotes the formation of appositions between the endoplasmic reticulum and the cell membrane. Acts as an inhibitor of ADGRD1 G-protein-coupled receptor activity in absence of cytosolic calcium. Binds glycerophospholipids in a barrel-like domain and may play a role in cellular lipid transport. This is Extended synaptotagmin-1 (Esyt1) from Mus musculus (Mouse).